A 520-amino-acid polypeptide reads, in one-letter code: GMP synthase [glutamine-hydrolyzing] (520 aa).

Residues 3–200 (AIAIIDFGSQ…FLDIANCKRD (198 aa)) enclose the Glutamine amidotransferase type-1 domain. C84 (nucleophile) is an active-site residue. Residues H175 and E177 contribute to the active site. The 186-residue stretch at 201-386 (WTMKSIIEKQ…IGLSNEIIFQ (186 aa)) folds into the GMPS ATP-PPase domain. 228–234 (SGGVDSS) lines the ATP pocket.

Homodimer.

The enzyme catalyses XMP + L-glutamine + ATP + H2O = GMP + L-glutamate + AMP + diphosphate + 2 H(+). It participates in purine metabolism; GMP biosynthesis; GMP from XMP (L-Gln route): step 1/1. Functionally, catalyzes the synthesis of GMP from XMP. The chain is GMP synthase [glutamine-hydrolyzing] from Wolbachia sp. subsp. Brugia malayi (strain TRS).